A 371-amino-acid polypeptide reads, in one-letter code: AA9 family lytic polysaccharide monooxygenase B (371 aa).

A signal peptide spans 1–25 (MSIAKIAGVVLGSAALVAGHGYVSG). Residues H20 and H104 each contribute to the Cu(2+) site. Intrachain disulfides connect C74–C194 and C115–C119. N154 is a glycosylation site (N-linked (GlcNAc...) asparagine). O2-binding residues include H180 and Q189. Y191 is a binding site for Cu(2+). The disordered stretch occupies residues 304 to 332 (HVQATSSSAAASTPTASSGASSGSGSSSS). The span at 307–332 (ATSSSAAASTPTASSGASSGSGSSSS) shows a compositional bias: low complexity.

This sequence belongs to the polysaccharide monooxygenase AA9 family. Requires Cu(2+) as cofactor.

It localises to the secreted. The catalysed reaction is [(1-&gt;4)-beta-D-glucosyl]n+m + reduced acceptor + O2 = 4-dehydro-beta-D-glucosyl-[(1-&gt;4)-beta-D-glucosyl]n-1 + [(1-&gt;4)-beta-D-glucosyl]m + acceptor + H2O.. Its function is as follows. Lytic polysaccharide monooxygenase (LPMO) that depolymerizes crystalline and amorphous polysaccharides via the oxidation of scissile alpha- or beta-(1-4)-glycosidic bonds, yielding C1 and C4 oxidation products. Catalysis by LPMOs requires the reduction of the active-site copper from Cu(II) to Cu(I) by a reducing agent and H(2)O(2) or O(2) as a cosubstrate. In addition to cellulose, also cleaves the beta-(1!4)-glucan backbone of tamarind xyloglucan, irrespective of substitutions which contrasts with AA9A xyloglucan cleavage activity. This is AA9 family lytic polysaccharide monooxygenase B from Aspergillus tamarii.